A 398-amino-acid polypeptide reads, in one-letter code: MNPVIFLVDMNAFFISCEMTRNSKLIGIPAAVAGNPQNRTGIVLAANYEARRFGVKTAMTLNNALKLCPTMTVVPPDHRFYRQKSSEVMNLLSKYTPIIEQSSIDEAWLDMTGTENLFGKPADAAKLIMEDIKENLGLWCSIGISEGKFLSKMASDMKKPLGITELWKRDIQTKLWPLSIKSMHGVGAKTYEKLHSLGIETIGDFANLKKDDAHQILGKFGLDLYHHAHGIDTTPVQVISPDDMKSIGRSTTLPEDLVDIEQLKYILLTLCEDIGRSARKHNKRGRTVNLTLKSSDFKVIHRQVTIKATFNTMEIYEAGYHLLKLHLNPKIPIRLIGVSISGFEDTSVPEQISIFNMDEFNKRDTIGNNRNEKIDMVMDSIRNKYGSDKISRASLIIK.

The UmuC domain occupies 5-187 (IFLVDMNAFF…LSIKSMHGVG (183 aa)). The Mg(2+) site is built by D9 and D105. E106 is a catalytic residue.

The protein belongs to the DNA polymerase type-Y family. In terms of assembly, monomer. It depends on Mg(2+) as a cofactor.

The protein resides in the cytoplasm. The catalysed reaction is DNA(n) + a 2'-deoxyribonucleoside 5'-triphosphate = DNA(n+1) + diphosphate. Poorly processive, error-prone DNA polymerase involved in untargeted mutagenesis. Copies undamaged DNA at stalled replication forks, which arise in vivo from mismatched or misaligned primer ends. These misaligned primers can be extended by PolIV. Exhibits no 3'-5' exonuclease (proofreading) activity. May be involved in translesional synthesis, in conjunction with the beta clamp from PolIII. The protein is DNA polymerase IV of Alkaliphilus oremlandii (strain OhILAs) (Clostridium oremlandii (strain OhILAs)).